A 148-amino-acid chain; its full sequence is D-aminoacyl-tRNA deacylase (148 aa).

Residues 137–138 (GP) carry the Gly-cisPro motif, important for rejection of L-amino acids motif.

Belongs to the DTD family. In terms of assembly, homodimer.

It localises to the cytoplasm. It carries out the reaction glycyl-tRNA(Ala) + H2O = tRNA(Ala) + glycine + H(+). The enzyme catalyses a D-aminoacyl-tRNA + H2O = a tRNA + a D-alpha-amino acid + H(+). In terms of biological role, an aminoacyl-tRNA editing enzyme that deacylates mischarged D-aminoacyl-tRNAs. Also deacylates mischarged glycyl-tRNA(Ala), protecting cells against glycine mischarging by AlaRS. Acts via tRNA-based rather than protein-based catalysis; rejects L-amino acids rather than detecting D-amino acids in the active site. By recycling D-aminoacyl-tRNA to D-amino acids and free tRNA molecules, this enzyme counteracts the toxicity associated with the formation of D-aminoacyl-tRNA entities in vivo and helps enforce protein L-homochirality. This Aquifex aeolicus (strain VF5) protein is D-aminoacyl-tRNA deacylase.